Reading from the N-terminus, the 734-residue chain is Photosystem I P700 chlorophyll a apoprotein A2 (734 aa).

The next 8 helical transmembrane spans lie at 46 to 69 (IFAS…FHVA), 135 to 158 (LYTG…LHLQ), 175 to 199 (LNHH…HVAI), 273 to 291 (IAHH…GHMY), 330 to 353 (LHFQ…QHMY), 369 to 395 (AALY…IFFI), 417 to 439 (AIIS…LYVH), and 517 to 535 (FLVH…LILV). Residues C559 and C568 each contribute to the [4Fe-4S] cluster site. 2 helical membrane passes run 575 to 596 (AFYL…YWHW) and 643 to 665 (LSVW…MFLI). H654, M662, and Y670 together coordinate chlorophyll a. W671 lines the phylloquinone pocket. A helical membrane pass occupies residues 707–727 (LVGLAHFSVGYIFTYAAFLIA).

This sequence belongs to the PsaA/PsaB family. The PsaA/B heterodimer binds the P700 chlorophyll special pair and subsequent electron acceptors. PSI consists of a core antenna complex that captures photons, and an electron transfer chain that converts photonic excitation into a charge separation. The eukaryotic PSI reaction center is composed of at least 11 subunits. The cofactor is P700 is a chlorophyll a/chlorophyll a' dimer, A0 is one or more chlorophyll a, A1 is one or both phylloquinones and FX is a shared 4Fe-4S iron-sulfur center..

Its subcellular location is the plastid. It is found in the chloroplast thylakoid membrane. It catalyses the reaction reduced [plastocyanin] + hnu + oxidized [2Fe-2S]-[ferredoxin] = oxidized [plastocyanin] + reduced [2Fe-2S]-[ferredoxin]. In terms of biological role, psaA and PsaB bind P700, the primary electron donor of photosystem I (PSI), as well as the electron acceptors A0, A1 and FX. PSI is a plastocyanin-ferredoxin oxidoreductase, converting photonic excitation into a charge separation, which transfers an electron from the donor P700 chlorophyll pair to the spectroscopically characterized acceptors A0, A1, FX, FA and FB in turn. Oxidized P700 is reduced on the lumenal side of the thylakoid membrane by plastocyanin. The chain is Photosystem I P700 chlorophyll a apoprotein A2 from Solanum bulbocastanum (Wild potato).